The primary structure comprises 819 residues: DNA topoisomerase 4 subunit A (819 aa).

Residues 30–496 (LPDIRDGLKP…QIIEIDTASL (467 aa)) form the Topo IIA-type catalytic domain. The active-site O-(5'-phospho-DNA)-tyrosine intermediate is tyrosine 118.

The protein belongs to the type II topoisomerase GyrA/ParC subunit family. ParC type 2 subfamily. In terms of assembly, heterotetramer composed of ParC and ParE.

The protein resides in the cell membrane. It carries out the reaction ATP-dependent breakage, passage and rejoining of double-stranded DNA.. Its function is as follows. Topoisomerase IV is essential for chromosome segregation. It relaxes supercoiled DNA. Performs the decatenation events required during the replication of a circular DNA molecule. This is DNA topoisomerase 4 subunit A from Streptococcus pyogenes serotype M3 (strain SSI-1).